The sequence spans 1254 residues: Structural polyprotein (1254 aa).

The necessary for nucleocapsid assembly and virus assembly stretch occupies residues Met-1–Phe-33. Positions Phe-33–Arg-68 are host transcription inhibition. The Supraphysiological nuclear export signal motif lies at Leu-41 to Leu-48. N-linked (GlcNAc...) asparagine; by host glycosylation is present at Asn-47. A disordered region spans residues Leu-48 to Val-118. A Nuclear localization signal motif is present at residues Lys-64 to Arg-68. The segment covering Gly-76–Lys-91 has biased composition (basic residues). The interval Ala-90 to Thr-126 is binding to the viral RNA. A phosphothreonine mark is found at Thr-92 and Thr-107. The span at Asn-103–Met-117 shows a compositional bias: basic residues. The segment at Pro-111–Lys-125 is ribosome-binding. A Phosphoserine modification is found at Ser-123. The Peptidase S3 domain occupies Lys-125–Trp-274. Thr-126 carries the post-translational modification Phosphothreonine. Catalysis depends on His-151, which acts as the Charge relay system. An interaction with spike glycoprotein E2 region spans residues Lys-167 to Tyr-172. Active-site charge relay system residues include Asp-173 and Ser-225. The tract at residues Glu-259–Thr-263 is interaction with spike glycoprotein E2. Residues Ser-275–Val-286 form a functions as an uncleaved signal peptide for the precursor of protein E3/E2 region. The Extracellular segment spans residues Ser-275 to Thr-702. Cystine bridges form between Cys-281–Cys-290, Cys-352–Cys-456, Cys-355–Cys-360, Cys-423–Cys-437, Cys-484–Cys-599, Cys-533–Cys-559, and Cys-535–Cys-553. Residue Asn-285 is glycosylated (N-linked (GlcNAc...) asparagine; by host). Residues Asn-545 and Asn-651 are each glycosylated (N-linked (GlcNAc...) asparagine; by host). Residues Gly-703–Cys-723 traverse the membrane as a helical segment. The interval Arg-724–Ser-728 is interaction with the capsid protein. Topologically, residues Arg-724 to Ala-756 are cytoplasmic. Residues Cys-729, Cys-749, and Cys-750 are each lipidated (S-palmitoyl cysteine; by host). Cys-729 and Cys-750 are oxidised to a cystine. The tract at residues Leu-735–Ala-754 is transient transmembrane before p62-6K protein processing. The Extracellular segment spans residues Glu-757–Asn-768. The chain crosses the membrane as a helical span at residues Asn-769–Thr-789. Arg-790 is a topological domain (cytoplasmic). Residues Leu-791–Gly-811 traverse the membrane as a helical segment. The Extracellular portion of the chain corresponds to Ala-812–Ser-1224. 4 disulfides stabilise this stretch: Cys-861/Cys-926, Cys-874/Cys-906, Cys-875/Cys-908, and Cys-880/Cys-890. Residues Val-896–Thr-913 are E1 fusion peptide loop. Residues Asn-946 and Asn-1082 are each glycosylated (N-linked (GlcNAc...) asparagine; by host). 4 cysteine pairs are disulfide-bonded: Cys-1071-Cys-1083, Cys-1113-Cys-1188, Cys-1118-Cys-1192, and Cys-1140-Cys-1182. Residues Leu-1225–Met-1245 traverse the membrane as a helical segment. Residues Tyr-1246 to Asn-1254 lie on the Cytoplasmic side of the membrane.

In terms of assembly, homodimer. Homomultimer. Interacts with host karyopherin KPNA4; this interaction allows the nuclear import of the viral capsid protein. Interacts with spike glycoprotein E2. Interacts with host IRAK1; the interaction leads to inhibition of IRAK1-dependent signaling. Part of a tetrameric complex composed of host CRM1, host importin alpha/beta dimer and the viral capsid; this complex blocks the receptor-mediated transport through the nuclear pore. Interacts with host phosphatase PPP1CA; this interaction dephosphorylates the capsid protein, which increases its ability to bind to the viral genome. As to quaternary structure, the precursor of protein E3/E2 and E1 form a heterodimer shortly after synthesis. Interacts with spike glycoprotein E2. The precursor of protein E3/E2 and E1 form a heterodimer shortly after synthesis. Processing of the precursor of protein E3/E2 into E2 and E3 results in a heterodimer of the spike glycoproteins E2 and E1. Spike at virion surface are constituted of three E2-E1 heterodimers. After target cell attachment and endocytosis, E1 change conformation to form homotrimers. Interacts with 6K protein. Interacts with host LDLRAD3; this interaction mediates viral entry to the host cell. In terms of assembly, interacts with spike glycoprotein E1. Processing of the precursor of protein E3/E2 into E2 and E3 results in a heterodimer of the spike glycoproteins E2 and E1. Spike at virion surface are constituted of a trimer of E2-E1 heterodimers. Interacts with 6K protein. Interacts with host LDLRAD3; this interaction mediates viral entry to the host cell. As to quaternary structure, oligomer. Interacts with spike glycoprotein E1. Interacts with spike glycoprotein E2. Post-translationally, structural polyprotein: Specific enzymatic cleavages in vivo yield mature proteins. Capsid protein is auto-cleaved during polyprotein translation, unmasking a signal peptide at the N-terminus of the precursor of E3/E2. The remaining polyprotein is then targeted to the host endoplasmic reticulum, where host signal peptidase cleaves it into pE2, 6K and E1 proteins. pE2 is further processed to mature E3 and E2 by host furin in trans-Golgi vesicle. Phosphorylated on serine and threonine residues. In terms of processing, palmitoylated via thioester bonds. These palmitoylations may induce disruption of the C-terminus transmembrane. This would result in the reorientation of E2 C-terminus from lumenal to cytoplasmic side. Post-translationally, N-glycosylated. Palmitoylated via thioester bonds.

The protein localises to the virion. It localises to the host cytoplasm. Its subcellular location is the host cell membrane. It is found in the host nucleus. The protein resides in the virion membrane. The protein localises to the host Golgi apparatus. It localises to the host trans-Golgi network. Its subcellular location is the host endoplasmic reticulum. It carries out the reaction Autocatalytic release of the core protein from the N-terminus of the togavirus structural polyprotein by hydrolysis of a -Trp-|-Ser- bond.. Forms an icosahedral capsid with a T=4 symmetry composed of 240 copies of the capsid protein surrounded by a lipid membrane through which penetrate 80 spikes composed of trimers of E1-E2 heterodimers. The capsid protein binds to the viral RNA genome at a site adjacent to a ribosome binding site for viral genome translation following genome release. Possesses a protease activity that results in its autocatalytic cleavage from the nascent structural protein. Following its self-cleavage, the capsid protein transiently associates with ribosomes, and within several minutes the protein binds to viral RNA and rapidly assembles into icosahedric core particles. The resulting nucleocapsid eventually associates with the cytoplasmic domain of the spike glycoprotein E2 at the cell membrane, leading to budding and formation of mature virions. In case of infection, new virions attach to target cells and after clathrin-mediated endocytosis their membrane fuses with the host endosomal membrane. This leads to the release of the nucleocapsid into the cytoplasm, followed by an uncoating event necessary for the genomic RNA to become accessible. The uncoating might be triggered by the interaction of capsid proteins with ribosomes. Binding of ribosomes would release the genomic RNA since the same region is genomic RNA-binding and ribosome-binding. Specifically inhibits interleukin-1 receptor-associated kinase 1/IRAK1-dependent signaling during viral entry, representing a means by which the alphaviruses may evade innate immune detection and activation prior to viral gene expression. Inhibits host transcription. Forms a tetrameric complex with XPO1/CRM1 and the nuclear import receptor importin. This complex blocks the central channel of host nuclear pores thereby inhibiting the receptor-mediated nuclear transport and thus the host mRNA and rRNA transcription. The inhibition of transcription is linked to a cytopathic effect on the host cell. Its function is as follows. Provides the signal sequence for the translocation of the precursor of protein E3/E2 to the host endoplasmic reticulum. Furin-cleaved E3 remains associated with spike glycoprotein E1 and mediates pH protection of the latter during the transport via the secretory pathway. After virion release from the host cell, the assembly protein E3 is gradually released in the extracellular space. In terms of biological role, plays a role in viral attachment to target host cell, by binding to the cell receptor LDLRAD3. Synthesized as a p62 precursor which is processed by furin at the cell membrane just before virion budding, giving rise to E2-E1 heterodimer. The p62-E1 heterodimer is stable, whereas E2-E1 is unstable and dissociate at low pH. p62 is processed at the last step, presumably to avoid E1 fusion activation before its final export to cell surface. E2 C-terminus contains a transitory transmembrane that would be disrupted by palmitoylation, resulting in reorientation of the C-terminal tail from lumenal to cytoplasmic side. This step is critical since E2 C-terminus is involved in budding by interacting with capsid proteins. This release of E2 C-terminus in cytoplasm occurs lately in protein export, and precludes premature assembly of particles at the endoplasmic reticulum membrane. Functionally, acts as a viroporin that participates in virus glycoprotein processing and transport to the plasma membrane, cell permeabilization and budding of viral particles. Disrupts the calcium homeostasis of the cell, probably at the endoplasmic reticulum level. This leads to cytoplasmic calcium elevation. Because of its lipophilic properties, the 6K protein is postulated to influence the selection of lipids that interact with the transmembrane domains of the glycoproteins, which, in turn, affects the deformability of the bilayer required for the extreme curvature that occurs as budding proceeds. Present in low amount in virions, about 3% compared to viral glycoproteins. Class II viral fusion protein. Fusion activity is inactive as long as E1 is bound to E2 in mature virion. After virus attachment to cell receptor LDLRAD3 and endocytosis, acidification of the endosome induce dissociation of E1/E2 heterodimer and concomitant trimerization of the E1 subunits. This E1 trimer is fusion active, and promotes release of viral nucleocapsid in cytoplasm after endosome and viral membrane fusion. Efficient fusion requires the presence of cholesterol and sphingolipid in the target membrane. The sequence is that of Structural polyprotein from Venezuelan equine encephalitis virus (strain Everglades Fe3-7c) (VEEV).